Reading from the N-terminus, the 215-residue chain is MQAFTVHKGLVAPMDRANVDTDAIIPKQFLKSIQRSGFGPNLFDEWRYLDKGEPGQESVVRKPNPDFVLNQPRYQGASILLTRENFGCGSSREHAPWALGQYGFRVLIAPSFADIFFNNCFKNGILPIVLPESVVARLFDEVHGFVGYQLTIDLPRQVVIKADGTELPFEVQAFRKYCLVNGFDDIGLTLRHADKIKAFEAERLAKMPWLGQRLL.

The protein belongs to the LeuD family. LeuD type 1 subfamily. In terms of assembly, heterodimer of LeuC and LeuD.

The catalysed reaction is (2R,3S)-3-isopropylmalate = (2S)-2-isopropylmalate. It functions in the pathway amino-acid biosynthesis; L-leucine biosynthesis; L-leucine from 3-methyl-2-oxobutanoate: step 2/4. Catalyzes the isomerization between 2-isopropylmalate and 3-isopropylmalate, via the formation of 2-isopropylmaleate. This chain is 3-isopropylmalate dehydratase small subunit, found in Leptothrix cholodnii (strain ATCC 51168 / LMG 8142 / SP-6) (Leptothrix discophora (strain SP-6)).